The following is a 267-amino-acid chain: Probable beta-lactamase YbxI (267 aa).

The first 23 residues, 1 to 23, serve as a signal peptide directing secretion; it reads MKKWIYVVLVLSIAGIGGFSVHA. The active-site Acyl-ester intermediate is the Ser-76. Residue Lys-79 is modified to N6-carboxylysine. 214 to 216 contacts substrate; that stretch reads KTG.

The protein belongs to the class-D beta-lactamase family.

The catalysed reaction is a beta-lactam + H2O = a substituted beta-amino acid. This chain is Probable beta-lactamase YbxI (ybxI), found in Bacillus subtilis (strain 168).